The following is a 423-amino-acid chain: Diaminobutyrate--2-oxoglutarate transaminase (423 aa).

The residue at position 271 (Lys-271) is an N6-(pyridoxal phosphate)lysine.

It belongs to the class-III pyridoxal-phosphate-dependent aminotransferase family. The cofactor is pyridoxal 5'-phosphate.

The catalysed reaction is L-2,4-diaminobutanoate + 2-oxoglutarate = L-aspartate 4-semialdehyde + L-glutamate. It functions in the pathway amine and polyamine biosynthesis; ectoine biosynthesis; L-ectoine from L-aspartate 4-semialdehyde: step 1/3. In terms of biological role, catalyzes reversively the conversion of L-aspartate beta-semialdehyde (ASA) to L-2,4-diaminobutyrate (DABA) by transamination with L-glutamate. The chain is Diaminobutyrate--2-oxoglutarate transaminase (ectB) from Streptomyces avermitilis (strain ATCC 31267 / DSM 46492 / JCM 5070 / NBRC 14893 / NCIMB 12804 / NRRL 8165 / MA-4680).